The chain runs to 599 residues: ATP-binding cassette sub-family E member 1 (599 aa).

4Fe-4S ferredoxin-type domains follow at residues 7–37 and 46–75; these read RIAI…MGKL and KIAW…IVNL. Residue K20 forms a Glycyl lysine isopeptide (Lys-Gly) (interchain with G-Cter in ubiquitin) linkage. ABC transporter domains lie at 79–315 and 342–562; these read LEKE…FLDG and VKKM…LSQL. Residues 110 to 117 and 379 to 386 contribute to the ATP site; these read GTNGIGKS and GENGTGKT. S417 is modified (phosphoserine). Residue T550 is modified to Phosphothreonine.

This sequence belongs to the ABC transporter superfamily. ABCE family. As to quaternary structure, (Microbial infection) Interacts with Chandipura virus matrix protein. In terms of assembly, interacts with PINK1. Interacts with CNOT4. Interacts with PELO. Probably heterodimerizes with RNASEL; this interaction inhibits RNASEL. (Microbial infection) Interacts with HIV-1 proteins Vif and Gag. As to quaternary structure, (Microbial infection) Interacts with HIV-2 protein Gag. In terms of processing, ubiquitinated by CNOT4. Ubiquitination mediates the recruitment of autophagy receptors to the mitochondrial outer membrane and initiates mitophagy.

It localises to the cytoplasm. It is found in the mitochondrion. The catalysed reaction is GTP + H2O = GDP + phosphate + H(+). It catalyses the reaction ATP + H2O = ADP + phosphate + H(+). The enzyme catalyses CTP + H2O = CDP + phosphate + H(+). It carries out the reaction UTP + H2O = UDP + phosphate + H(+). Nucleoside-triphosphatase (NTPase) involved in ribosome recycling by mediating ribosome disassembly. Able to hydrolyze ATP, GTP, UTP and CTP. Splits ribosomes into free 60S subunits and tRNA- and mRNA-bound 40S subunits. Acts either after canonical termination facilitated by release factors (ETF1/eRF1) or after recognition of stalled and vacant ribosomes by mRNA surveillance factors (PELO/Pelota). Involved in the No-Go Decay (NGD) pathway: recruited to stalled ribosomes by the Pelota-HBS1L complex, and drives the disassembly of stalled ribosomes, followed by degradation of damaged mRNAs as part of the NGD pathway. Also plays a role in quality control of translation of mitochondrial outer membrane-localized mRNA. As part of the PINK1-regulated signaling, ubiquitinated by CNOT4 upon mitochondria damage; this modification generates polyubiquitin signals that recruit autophagy receptors to the mitochondrial outer membrane and initiate mitophagy. RNASEL-specific protein inhibitor which antagonizes the binding of 2-5A (5'-phosphorylated 2',5'-linked oligoadenylates) to RNASEL. Negative regulator of the anti-viral effect of the interferon-regulated 2-5A/RNASEL pathway. Its function is as follows. (Microbial infection) May act as a chaperone for post-translational events during HIV-1 capsid assembly. Functionally, (Microbial infection) Plays a role in the down-regulation of the 2-5A/RNASEL pathway during encephalomyocarditis virus (EMCV) and HIV-1 infections. This Homo sapiens (Human) protein is ATP-binding cassette sub-family E member 1 (ABCE1).